The chain runs to 127 residues: MTQSVPPGDIQTQPGTKIVFNAPYDDKHTYHIKVINSSARRIGYGIKTTNMKRLGVDPPCGVLDPKEAVLLAVSCDAFAFGQEDTNNDRITVEWTNTPDGAAKQFRREWFQGDGMVRRKNLPIEYNP.

Threonine 2 is subject to N-acetylthreonine. In terms of domain architecture, MSP spans aspartate 9–asparagine 126.

Sperm.

The protein localises to the cell projection. Its subcellular location is the pseudopodium. The protein resides in the cytoplasm. It localises to the cytoskeleton. Central component in molecular interactions underlying sperm crawling. Forms an extensive filament system that extends from sperm villipoda, along the leading edge of the pseudopod. This Caenorhabditis elegans protein is Major sperm protein 152 (msp-152).